Reading from the N-terminus, the 416-residue chain is MIHPDPTLFGHDPWWLILAKAVGVFVFLVLTVLAAILIERKVLGRMQMRFGPNRVGPKGLLQSLADGIKLALKEGITPAGVDKPVYLLAPVISVIPAFLAFAVIPMGGEVSVFGHRTALQLTDLAVAVLYILAVTSVGVYGIVLAGWASGSTYPLLGGLRSSAQVVSYEIAMALSFATVFLYAGTMSTSGIVAAQTSTWYVFLLLPSFLVYVTSMVGETNRAPFDLPEAEGELVGGFHTEYSSLKFAMFMLAEYVNMTTVSALATTMFLGGWHAPWPISLWEGANSGWWPLLWFTAKVWVFLFVYIWLRGTLPRLRYDQFMAIGWKMLIPVSLAWIMIVATAHSLRTTGHGGWASGLLIAGTVLTFGLAVVLWRTMRFRADRTVPARTAADVFPIPPIPGRAGAARTPESRETTDA.

Transmembrane regions (helical) follow at residues 16 to 36, 84 to 104, 124 to 144, 165 to 185, 197 to 217, 260 to 280, 288 to 308, 320 to 340, and 353 to 373; these read LILAKAVGVFVFLVLTVLAAI, PVYLLAPVISVIPAFLAFAVI, LAVAVLYILAVTSVGVYGIVL, VVSYEIAMALSFATVFLYAGT, STWYVFLLLPSFLVYVTSMVG, VSALATTMFLGGWHAPWPISL, WWPLLWFTAKVWVFLFVYIWL, FMAIGWKMLIPVSLAWIMIVA, and WASGLLIAGTVLTFGLAVVLW.

It belongs to the complex I subunit 1 family. As to quaternary structure, NDH-1 is composed of 14 different subunits. Subunits NuoA, H, J, K, L, M, N constitute the membrane sector of the complex.

Its subcellular location is the cell membrane. It carries out the reaction a quinone + NADH + 5 H(+)(in) = a quinol + NAD(+) + 4 H(+)(out). Functionally, NDH-1 shuttles electrons from NADH, via FMN and iron-sulfur (Fe-S) centers, to quinones in the respiratory chain. The immediate electron acceptor for the enzyme in this species is believed to be menaquinone. Couples the redox reaction to proton translocation (for every two electrons transferred, four hydrogen ions are translocated across the cytoplasmic membrane), and thus conserves the redox energy in a proton gradient. This subunit may bind ubiquinone. The chain is NADH-quinone oxidoreductase subunit H from Mycobacterium sp. (strain JLS).